A 643-amino-acid polypeptide reads, in one-letter code: Long-chain fatty acid transport protein 4 (643 aa).

2 helical membrane passes run 20 to 42 (LPWT…WRFI) and 139 to 156 (FVGL…AALI). Residue 243–254 (YIYTSGTTGLPK) coordinates AMP.

The protein belongs to the ATP-dependent AMP-binding enzyme family.

Its subcellular location is the endoplasmic reticulum membrane. The enzyme catalyses a fatty acid(in) = a fatty acid(out). The catalysed reaction is (9Z,12Z)-octadecadienoate(out) = (9Z,12Z)-octadecadienoate(in). It catalyses the reaction (9Z)-octadecenoate(out) = (9Z)-octadecenoate(in). It carries out the reaction hexadecanoate(out) = hexadecanoate(in). The enzyme catalyses a long-chain fatty acid + ATP + CoA = a long-chain fatty acyl-CoA + AMP + diphosphate. The catalysed reaction is (5Z,8Z,11Z,14Z)-eicosatetraenoate + ATP + CoA = (5Z,8Z,11Z,14Z)-eicosatetraenoyl-CoA + AMP + diphosphate. It catalyses the reaction (9Z)-octadecenoate + ATP + CoA = (9Z)-octadecenoyl-CoA + AMP + diphosphate. It carries out the reaction hexadecanoate + ATP + CoA = hexadecanoyl-CoA + AMP + diphosphate. The enzyme catalyses (E)-hexadec-2-enoate + ATP + CoA = (2E)-hexadecenoyl-CoA + AMP + diphosphate. The catalysed reaction is a very long-chain fatty acid + ATP + CoA = a very long-chain fatty acyl-CoA + AMP + diphosphate. It catalyses the reaction tetracosanoate + ATP + CoA = tetracosanoyl-CoA + AMP + diphosphate. Functionally, mediates the import of long-chain fatty acids (LCFA) into the cell by facilitating their transport across cell membranes. Appears to be the principal fatty acid transporter in small intestinal enterocytes. Also functions as an acyl-CoA ligase catalyzing the ATP-dependent formation of fatty acyl-CoA using LCFA and very-long-chain fatty acids (VLCFA) as substrates, which prevents fatty acid efflux from cells and might drive more fatty acid uptake. Plays a role in the formation of the epidermal barrier. Required for fat absorption in early embryogenesis. Probably involved in fatty acid transport across the blood barrier. Indirectly inhibits RPE65 via substrate competition and via production of VLCFA derivatives like lignoceroyl-CoA. Prevents light-induced degeneration of rods and cones. This Pongo abelii (Sumatran orangutan) protein is Long-chain fatty acid transport protein 4 (SLC27A4).